The sequence spans 323 residues: tRNA-dihydrouridine(20/20a) synthase (323 aa).

Residues 14–16 (PML) and Gln66 contribute to the FMN site. The active-site Proton donor is Cys96. FMN contacts are provided by residues Lys135, His166, 206–208 (NGG), and 228–229 (GR).

The protein belongs to the Dus family. DusA subfamily. FMN is required as a cofactor.

The enzyme catalyses 5,6-dihydrouridine(20) in tRNA + NADP(+) = uridine(20) in tRNA + NADPH + H(+). It carries out the reaction 5,6-dihydrouridine(20) in tRNA + NAD(+) = uridine(20) in tRNA + NADH + H(+). The catalysed reaction is 5,6-dihydrouridine(20a) in tRNA + NADP(+) = uridine(20a) in tRNA + NADPH + H(+). It catalyses the reaction 5,6-dihydrouridine(20a) in tRNA + NAD(+) = uridine(20a) in tRNA + NADH + H(+). Its function is as follows. Catalyzes the synthesis of 5,6-dihydrouridine (D), a modified base found in the D-loop of most tRNAs, via the reduction of the C5-C6 double bond in target uridines. Specifically modifies U20 and U20a in tRNAs. The protein is tRNA-dihydrouridine(20/20a) synthase of Haemophilus ducreyi (strain 35000HP / ATCC 700724).